The primary structure comprises 471 residues: MKVKTRFAPSPTGFLHVGGARTALYSWLFAKNQGGEFVLRIEDTDLERSTQEAIDAIIEGMEWLELNWDEGPYYQTKRFDRYNGLIDEMLADGRAYKCYCSKERLEALREGQMANGEKPRYDGKCRDHAHDHPADAPHVIRFRNPTEGSVVFDDHVRGRIEFANTELDDLIIRRTDGAPTYNFCVVVDDWDMEITHVVRGEDHINNTPRQINIYKALNAPVPEFAHVSMILGDDGAKLSKRHGAVSVMQYRDDGYLPEALLNYLVRLGWSHGDQEIFSLEEMIKLFSLDAISKSASAFNTDKLLWLNNHYMRSLDPAYVAKHLAWHMADQKIDTSKGPALADVVTLLAERCNTLVEMAAQSRYLFEEYEAIDEAAAKKHLRGVAAEPLTLAKAKLAALDSWTTEALHELIEATAAELGQGMGKVGMPLRVAVTGLGQSPGIDAVMALVGKERVLARIDRALAYIEARMAAE.

Positions 9 to 19 (PSPTGFLHVGG) match the 'HIGH' region motif. Zn(2+)-binding residues include Cys98, Cys100, Cys125, and Asp127. A 'KMSKS' region motif is present at residues 237-241 (KLSKR). An ATP-binding site is contributed by Lys240.

It belongs to the class-I aminoacyl-tRNA synthetase family. Glutamate--tRNA ligase type 1 subfamily. In terms of assembly, monomer. It depends on Zn(2+) as a cofactor.

It localises to the cytoplasm. It carries out the reaction tRNA(Glu) + L-glutamate + ATP = L-glutamyl-tRNA(Glu) + AMP + diphosphate. Its function is as follows. Catalyzes the attachment of glutamate to tRNA(Glu) in a two-step reaction: glutamate is first activated by ATP to form Glu-AMP and then transferred to the acceptor end of tRNA(Glu). This is Glutamate--tRNA ligase from Aeromonas hydrophila subsp. hydrophila (strain ATCC 7966 / DSM 30187 / BCRC 13018 / CCUG 14551 / JCM 1027 / KCTC 2358 / NCIMB 9240 / NCTC 8049).